A 225-amino-acid chain; its full sequence is NAD(P)H-quinone oxidoreductase subunit K, chloroplastic (225 aa).

[4Fe-4S] cluster is bound by residues Cys-43, Cys-44, Cys-108, and Cys-139.

The protein belongs to the complex I 20 kDa subunit family. In terms of assembly, NDH is composed of at least 16 different subunits, 5 of which are encoded in the nucleus. [4Fe-4S] cluster serves as cofactor.

Its subcellular location is the plastid. The protein localises to the chloroplast thylakoid membrane. The enzyme catalyses a plastoquinone + NADH + (n+1) H(+)(in) = a plastoquinol + NAD(+) + n H(+)(out). It carries out the reaction a plastoquinone + NADPH + (n+1) H(+)(in) = a plastoquinol + NADP(+) + n H(+)(out). In terms of biological role, NDH shuttles electrons from NAD(P)H:plastoquinone, via FMN and iron-sulfur (Fe-S) centers, to quinones in the photosynthetic chain and possibly in a chloroplast respiratory chain. The immediate electron acceptor for the enzyme in this species is believed to be plastoquinone. Couples the redox reaction to proton translocation, and thus conserves the redox energy in a proton gradient. The protein is NAD(P)H-quinone oxidoreductase subunit K, chloroplastic of Carica papaya (Papaya).